Here is a 166-residue protein sequence, read N- to C-terminus: Large ribosomal subunit protein uL10 (166 aa).

Part of the ribosomal stalk of the 50S ribosomal subunit. The N-terminus interacts with L11 and 23S rRNA to form the base of the stalk. The C-terminus forms an elongated spine to which L12 dimers bind in a sequential fashion forming a pentameric L10(L12)2(L12)2 complex.

In terms of biological role, forms part of the ribosomal stalk, playing a central role in the interaction of the ribosome with GTP-bound translation factors (such as IF-2, EF-Tu, EF-G and RF3). The polypeptide is Large ribosomal subunit protein uL10 (rplJ) (Bacillus subtilis (strain 168)).